We begin with the raw amino-acid sequence, 644 residues long: Exoribonuclease 2 (644 aa).

The RNB domain maps to 189 to 516 (REDLTALDFV…NHRLLKAVIK (328 aa)). The S1 motif domain maps to 561–643 (DTRFAAEIVD…ETRSIIARPV (83 aa)).

This sequence belongs to the RNR ribonuclease family. RNase II subfamily.

It localises to the cytoplasm. It carries out the reaction Exonucleolytic cleavage in the 3'- to 5'-direction to yield nucleoside 5'-phosphates.. In terms of biological role, involved in mRNA degradation. Hydrolyzes single-stranded polyribonucleotides processively in the 3' to 5' direction. The protein is Exoribonuclease 2 of Escherichia coli (strain ATCC 8739 / DSM 1576 / NBRC 3972 / NCIMB 8545 / WDCM 00012 / Crooks).